The following is a 118-amino-acid chain: Large ribosomal subunit protein bL19 (118 aa).

Belongs to the bacterial ribosomal protein bL19 family.

In terms of biological role, this protein is located at the 30S-50S ribosomal subunit interface and may play a role in the structure and function of the aminoacyl-tRNA binding site. This chain is Large ribosomal subunit protein bL19, found in Helicobacter hepaticus (strain ATCC 51449 / 3B1).